The primary structure comprises 194 residues: GTP cyclohydrolase 1 (194 aa).

Zn(2+) contacts are provided by Cys-83, His-86, and Cys-155.

The protein belongs to the GTP cyclohydrolase I family. Homomer.

It catalyses the reaction GTP + H2O = 7,8-dihydroneopterin 3'-triphosphate + formate + H(+). Its pathway is cofactor biosynthesis; 7,8-dihydroneopterin triphosphate biosynthesis; 7,8-dihydroneopterin triphosphate from GTP: step 1/1. The sequence is that of GTP cyclohydrolase 1 from Streptococcus pyogenes serotype M49 (strain NZ131).